A 600-amino-acid polypeptide reads, in one-letter code: Proline--tRNA ligase (600 aa).

This sequence belongs to the class-II aminoacyl-tRNA synthetase family. ProS type 1 subfamily. As to quaternary structure, homodimer.

It localises to the cytoplasm. The enzyme catalyses tRNA(Pro) + L-proline + ATP = L-prolyl-tRNA(Pro) + AMP + diphosphate. Functionally, catalyzes the attachment of proline to tRNA(Pro) in a two-step reaction: proline is first activated by ATP to form Pro-AMP and then transferred to the acceptor end of tRNA(Pro). As ProRS can inadvertently accommodate and process non-cognate amino acids such as alanine and cysteine, to avoid such errors it has two additional distinct editing activities against alanine. One activity is designated as 'pretransfer' editing and involves the tRNA(Pro)-independent hydrolysis of activated Ala-AMP. The other activity is designated 'posttransfer' editing and involves deacylation of mischarged Ala-tRNA(Pro). The misacylated Cys-tRNA(Pro) is not edited by ProRS. This chain is Proline--tRNA ligase, found in Gloeothece citriformis (strain PCC 7424) (Cyanothece sp. (strain PCC 7424)).